The following is a 266-amino-acid chain: Tryptophan synthase alpha chain (266 aa).

Active-site proton acceptor residues include E49 and D60.

The protein belongs to the TrpA family. In terms of assembly, tetramer of two alpha and two beta chains.

The enzyme catalyses (1S,2R)-1-C-(indol-3-yl)glycerol 3-phosphate + L-serine = D-glyceraldehyde 3-phosphate + L-tryptophan + H2O. It functions in the pathway amino-acid biosynthesis; L-tryptophan biosynthesis; L-tryptophan from chorismate: step 5/5. The alpha subunit is responsible for the aldol cleavage of indoleglycerol phosphate to indole and glyceraldehyde 3-phosphate. The chain is Tryptophan synthase alpha chain from Chloroflexus aurantiacus (strain ATCC 29364 / DSM 637 / Y-400-fl).